Consider the following 22-residue polypeptide: Chymotrypsin inhibitor (22 aa).

The interval 1–22 (FDESFGFQGPSTYEKTPLGEPA) is disordered.

Hemolymph.

Its subcellular location is the secreted. It localises to the extracellular space. In terms of biological role, inhibits chymotrypsin stoichiometrically. Also inhibits porcine pancreatic elastase and trypsin. The protein is Chymotrypsin inhibitor of Mythimna unipuncta (Armyworm moth).